A 122-amino-acid polypeptide reads, in one-letter code: Large ribosomal subunit protein uL14 (122 aa).

The protein belongs to the universal ribosomal protein uL14 family. Part of the 50S ribosomal subunit. Forms a cluster with proteins L3 and L19. In the 70S ribosome, L14 and L19 interact and together make contacts with the 16S rRNA in bridges B5 and B8.

In terms of biological role, binds to 23S rRNA. Forms part of two intersubunit bridges in the 70S ribosome. The protein is Large ribosomal subunit protein uL14 of Idiomarina loihiensis (strain ATCC BAA-735 / DSM 15497 / L2-TR).